The primary structure comprises 276 residues: Shikimate dehydrogenase (NADP(+)) (276 aa).

Shikimate contacts are provided by residues 19–21 (SKS) and Thr66. Lys70 serves as the catalytic Proton acceptor. Asp82 contacts NADP(+). Shikimate contacts are provided by Asn91 and Asp107. NADP(+)-binding positions include 133 to 137 (GAGGA), 157 to 162 (NRTRSR), and Leu222. A shikimate-binding site is contributed by Tyr224. Residue Gly245 participates in NADP(+) binding.

Belongs to the shikimate dehydrogenase family. As to quaternary structure, homodimer.

The catalysed reaction is shikimate + NADP(+) = 3-dehydroshikimate + NADPH + H(+). It participates in metabolic intermediate biosynthesis; chorismate biosynthesis; chorismate from D-erythrose 4-phosphate and phosphoenolpyruvate: step 4/7. In terms of biological role, involved in the biosynthesis of the chorismate, which leads to the biosynthesis of aromatic amino acids. Catalyzes the reversible NADPH linked reduction of 3-dehydroshikimate (DHSA) to yield shikimate (SA). The protein is Shikimate dehydrogenase (NADP(+)) of Ruegeria sp. (strain TM1040) (Silicibacter sp.).